The sequence spans 946 residues: Bifunctional glutamine synthetase adenylyltransferase/adenylyl-removing enzyme (946 aa).

The adenylyl removase stretch occupies residues 1–440 (MKPLSSPLQQ…VFNELIGDDE (440 aa)). Residues 449-946 (SEQWRELWQD…ASWQKWLVEE (498 aa)) are adenylyl transferase.

The protein belongs to the GlnE family. Mg(2+) serves as cofactor.

It carries out the reaction [glutamine synthetase]-O(4)-(5'-adenylyl)-L-tyrosine + phosphate = [glutamine synthetase]-L-tyrosine + ADP. The catalysed reaction is [glutamine synthetase]-L-tyrosine + ATP = [glutamine synthetase]-O(4)-(5'-adenylyl)-L-tyrosine + diphosphate. Functionally, involved in the regulation of glutamine synthetase GlnA, a key enzyme in the process to assimilate ammonia. When cellular nitrogen levels are high, the C-terminal adenylyl transferase (AT) inactivates GlnA by covalent transfer of an adenylyl group from ATP to specific tyrosine residue of GlnA, thus reducing its activity. Conversely, when nitrogen levels are low, the N-terminal adenylyl removase (AR) activates GlnA by removing the adenylyl group by phosphorolysis, increasing its activity. The regulatory region of GlnE binds the signal transduction protein PII (GlnB) which indicates the nitrogen status of the cell. This is Bifunctional glutamine synthetase adenylyltransferase/adenylyl-removing enzyme from Shigella dysenteriae serotype 1 (strain Sd197).